The sequence spans 131 residues: Protein DfrA (131 aa).

Belongs to the RutC family.

The protein is Protein DfrA (dfrA) of Myxococcus xanthus.